Here is a 292-residue protein sequence, read N- to C-terminus: 4-hydroxy-tetrahydrodipicolinate synthase (292 aa).

Thr45 provides a ligand contact to pyruvate. Catalysis depends on Tyr133, which acts as the Proton donor/acceptor. The Schiff-base intermediate with substrate role is filled by Lys161. Residue Ile203 coordinates pyruvate.

Belongs to the DapA family. In terms of assembly, homodimer.

The protein resides in the cytoplasm. It carries out the reaction L-aspartate 4-semialdehyde + pyruvate = (2S,4S)-4-hydroxy-2,3,4,5-tetrahydrodipicolinate + H2O + H(+). It participates in amino-acid biosynthesis; L-lysine biosynthesis via DAP pathway; (S)-tetrahydrodipicolinate from L-aspartate: step 3/4. Catalyzes the condensation of (S)-aspartate-beta-semialdehyde [(S)-ASA] and pyruvate to 4-hydroxy-tetrahydrodipicolinate (HTPA). The protein is 4-hydroxy-tetrahydrodipicolinate synthase of Pseudomonas aeruginosa (strain ATCC 15692 / DSM 22644 / CIP 104116 / JCM 14847 / LMG 12228 / 1C / PRS 101 / PAO1).